Reading from the N-terminus, the 254-residue chain is Hydroxyethylthiazole kinase (254 aa).

A substrate-binding site is contributed by methionine 40. Residues arginine 116 and serine 162 each contribute to the ATP site. Residue glycine 189 participates in substrate binding.

This sequence belongs to the Thz kinase family. The cofactor is Mg(2+).

It carries out the reaction 5-(2-hydroxyethyl)-4-methylthiazole + ATP = 4-methyl-5-(2-phosphooxyethyl)-thiazole + ADP + H(+). Its pathway is cofactor biosynthesis; thiamine diphosphate biosynthesis; 4-methyl-5-(2-phosphoethyl)-thiazole from 5-(2-hydroxyethyl)-4-methylthiazole: step 1/1. In terms of biological role, catalyzes the phosphorylation of the hydroxyl group of 4-methyl-5-beta-hydroxyethylthiazole (THZ). In Limosilactobacillus fermentum (strain NBRC 3956 / LMG 18251) (Lactobacillus fermentum), this protein is Hydroxyethylthiazole kinase.